The sequence spans 311 residues: Porphobilinogen deaminase (311 aa).

The residue at position 240 (Cys-240) is an S-(dipyrrolylmethanemethyl)cysteine.

Belongs to the HMBS family. In terms of assembly, monomer. Dipyrromethane serves as cofactor.

It catalyses the reaction 4 porphobilinogen + H2O = hydroxymethylbilane + 4 NH4(+). The protein operates within porphyrin-containing compound metabolism; protoporphyrin-IX biosynthesis; coproporphyrinogen-III from 5-aminolevulinate: step 2/4. Functionally, tetrapolymerization of the monopyrrole PBG into the hydroxymethylbilane pre-uroporphyrinogen in several discrete steps. This is Porphobilinogen deaminase from Natranaerobius thermophilus (strain ATCC BAA-1301 / DSM 18059 / JW/NM-WN-LF).